Consider the following 645-residue polypeptide: MERQSRVMSEKDEYQFQHQGAVELLVFNFLLILTILTIWLFKNHRFRFLHETGGAMVYGLIMGLILRYATAPTDIESGTVYDCVKLTFSPSTLLVNITDQVYEYKYKREISQHNINPHQGNAILEKMTFDPEIFFNVLLPPIIFHAGYSLKKRHFFQNLGSILTYAFLGTAISCIVIGLIMYGFVKAMIHAGQLKNGDFHFTDCLFFGSLMSATDPVTVLAIFHELHVDPDLYTLLFGESVLNDAVAIVLTYSISIYSPKENPNAFDAAAFFQSVGNFLGIFAGSFAMGSAYAIITALLTKFTKLCEFPMLETGLFFLLSWSAFLSAEAAGLTGIVAVLFCGVTQAHYTYNNLSSDSKIRTKQLFEFMNFLAENVIFCYMGLALFTFQNHIFNALFILGAFLAIFVARACNIYPLSFLLNLGRKQKIPWNFQHMMMFSGLRGAIAFALAIRNTESQPKQMMFTTTLLLVFFTVWVFGGGTTPMLTWLQIRVGVDLDENLKEDPSSQHQEANNLDKNMTKAESARLFRMWYSFDHKYLKPILTHSGPPLTTTLPEWCGPISRLLTSPQAYGEQLKEDDVECIVNQDELAINYQEQASSPCSPPARLGLDQKASPQTPGKENIYEGDLGLGGYELKLEQTLGQSQLN.

At 1-20 (MERQSRVMSEKDEYQFQHQG) the chain is on the lumenal side. A helical membrane pass occupies residues 21 to 41 (AVELLVFNFLLILTILTIWLF). Residues 42–45 (KNHR) lie on the Cytoplasmic side of the membrane. The chain crosses the membrane as a helical span at residues 46–66 (FRFLHETGGAMVYGLIMGLIL). Over 67–126 (RYATAPTDIESGTVYDCVKLTFSPSTLLVNITDQVYEYKYKREISQHNINPHQGNAILEK) the chain is Lumenal. Asn96 carries an N-linked (GlcNAc...) asparagine glycan. Residues 127–147 (MTFDPEIFFNVLLPPIIFHAG) form a helical membrane-spanning segment. The Cytoplasmic segment spans residues 148–164 (YSLKKRHFFQNLGSILT). The chain crosses the membrane as a helical span at residues 165 to 185 (YAFLGTAISCIVIGLIMYGFV). Residues 186–203 (KAMIHAGQLKNGDFHFTD) lie on the Lumenal side of the membrane. A helical membrane pass occupies residues 204-224 (CLFFGSLMSATDPVTVLAIFH). At 225 to 235 (ELHVDPDLYTL) the chain is on the cytoplasmic side. Residues 236–256 (LFGESVLNDAVAIVLTYSISI) form a helical membrane-spanning segment. The Lumenal segment spans residues 257–277 (YSPKENPNAFDAAAFFQSVGN). Residues 278–298 (FLGIFAGSFAMGSAYAIITAL) traverse the membrane as a helical segment. The Cytoplasmic segment spans residues 299 to 301 (LTK). 2 helical membrane passes run 302–322 (FTKL…LSWS) and 323–343 (AFLS…FCGV). The Cytoplasmic portion of the chain corresponds to 344-364 (TQAHYTYNNLSSDSKIRTKQL). The helical transmembrane segment at 365–385 (FEFMNFLAENVIFCYMGLALF) threads the bilayer. Position 386 (Thr386) is a topological domain, lumenal. Residues 387-407 (FQNHIFNALFILGAFLAIFVA) form a helical membrane-spanning segment. At 408–429 (RACNIYPLSFLLNLGRKQKIPW) the chain is on the cytoplasmic side. Residues 430-450 (NFQHMMMFSGLRGAIAFALAI) traverse the membrane as a helical segment. Residues 451–465 (RNTESQPKQMMFTTT) lie on the Lumenal side of the membrane. Residues 466–486 (LLLVFFTVWVFGGGTTPMLTW) traverse the membrane as a helical segment. The Cytoplasmic portion of the chain corresponds to 487–645 (LQIRVGVDLD…EQTLGQSQLN (159 aa)). Positions 594-622 (QASSPCSPPARLGLDQKASPQTPGKENIY) are disordered.

Belongs to the monovalent cation:proton antiporter 1 (CPA1) transporter (TC 2.A.36) family. As to quaternary structure, homodimer; phosphatidylinositol-4,5-bisphosphate (PIP2) and phosphatidylinositol 3,4,5-trisphosphate (PIP3) could be involved in the dimer stabilization. Interacts (via the C-terminus) with RACK1. Interacts with CHP1. As to expression, ubiquitously expressed in all tissues tested. Expressed at highest levels in heart and skeletal muscle, followed by placenta, kidney, and liver. Expressed in the brain, in the medulla and spinal cord.

The protein resides in the late endosome membrane. The protein localises to the early endosome membrane. It localises to the recycling endosome membrane. Its subcellular location is the cell membrane. It is found in the cytoplasmic vesicle. The protein resides in the phagosome membrane. The catalysed reaction is Na(+)(in) + H(+)(out) = Na(+)(out) + H(+)(in). It catalyses the reaction K(+)(in) + H(+)(out) = K(+)(out) + H(+)(in). In terms of biological role, endosomal Na(+), K(+)/H(+) antiporter. Mediates the electroneutral exchange of endosomal luminal H(+) for a cytosolic Na(+) or K(+). By facilitating proton efflux, SLC9A9 counteracts the acidity generated by vacuolar (V)-ATPase, thereby limiting luminal acidification. Regulates organellar pH and consequently, e.g., endosome maturation and endocytic trafficking of plasma membrane receptors and neurotransporters. Promotes the recycling of transferrin receptors back to the cell surface to facilitate additional iron uptake in the brain. Regulates synaptic transmission by regulating the luminal pH of axonal endosomes. Regulates phagosome lumenal pH, thus affecting phagosome maturation, and consequently, microbicidal activity in macrophages. Can also be active at the cell surface of specialized cells, e.g., in the inner ear hair bundles uses the high K(+) of the endolymph to regulate intracelular pH. This Homo sapiens (Human) protein is Sodium/hydrogen exchanger 9.